Here is a 430-residue protein sequence, read N- to C-terminus: Histidine--tRNA ligase (430 aa).

The protein belongs to the class-II aminoacyl-tRNA synthetase family. As to quaternary structure, homodimer.

Its subcellular location is the cytoplasm. The enzyme catalyses tRNA(His) + L-histidine + ATP = L-histidyl-tRNA(His) + AMP + diphosphate + H(+). The protein is Histidine--tRNA ligase of Chlorobaculum parvum (strain DSM 263 / NCIMB 8327) (Chlorobium vibrioforme subsp. thiosulfatophilum).